The primary structure comprises 857 residues: A-kinase anchor protein 1, mitochondrial (857 aa).

Residues 1-29 constitute a mitochondrion transit peptide; the sequence is MAIQLRSLFPLALPGMLALLGWWWFFSRK. Serine 55 is subject to Phosphoserine. The segment at 65–121 is disordered; sequence VAPTVTQPPGREEQRCVDKPSTEPLALPRTRQVRRRSESSGNLPSVADTRSQPGPCR. The span at 74 to 85 shows a compositional bias: basic and acidic residues; that stretch reads GREEQRCVDKPS. A phosphoserine mark is found at serine 101, serine 103, and serine 164. Polar residues predominate over residues 103–116; sequence SSGNLPSVADTRSQ. Disordered regions lie at residues 165–198 and 260–303; these read ALGKTPGRGWPSPYAASGEKARETGGTEGTGDAV and FVEP…VPEN. Over residues 286–299 the composition is skewed to basic and acidic residues; the sequence is SDRDLAGELDKDET. The PKA-RII subunit binding domain stretch occupies residues 306-319; that stretch reads IKQAAFQLISQVIL. Disordered regions lie at residues 336–437, 466–497, and 512–554; these read QVHP…NPRG, STSGLEDSCTETISSSGDKAMTPPLPVSTQPF, and EDGW…QAGS. Residues 354-379 are compositionally biased toward polar residues; sequence PASQETSLGQDTSDPASTRTGATASP. Phosphothreonine is present on threonine 401. Over residues 466–482 the composition is skewed to polar residues; it reads STSGLEDSCTETISSSG. Threonine 487 is modified (phosphothreonine). Phosphoserine is present on residues serine 527 and serine 546. Residues 545–554 are compositionally biased toward polar residues; that stretch reads DSPQSVQAGS. Residues 561–625 form the KH domain; it reads LIIWEIEVPK…HHVDKALNLI (65 aa). Positions 712-771 constitute a Tudor domain; that stretch reads PVEITVICAAPGADGAWWRAQVVASYEETNEVEIRYVDYGGYKRVKVDVLRQIRSDFVTL.

As to quaternary structure, interacts with SLC8A3. Interacts with CFAP91. Interacts with CLPB. Interacts with NDUFS1. Highest expression in testis, heart, liver, skeletal muscle, intestine and kidney, followed by brain and lung. No expression in spleen. Isoform 1/D-AKAP1A is expressed predominantly in testis whereas isoform 4/D-AKAP1D is expressed primarily in liver. Expression is decreased in hearts of diabetic mice (at protein level).

It is found in the mitochondrion outer membrane. The protein resides in the mitochondrion. The protein localises to the endoplasmic reticulum. Functionally, differentially targeted protein that binds to type I and II regulatory subunits of protein kinase A. Anchors them to the cytoplasmic face of the mitochondrial outer membrane or allows them to reside in the endoplasmic reticulum. Involved in mitochondrial-mediated antiviral innate immunity. Promotes translocation of NDUFS1 into mitochondria to regulate mitochondrial membrane respiratory chain NADH dehydrogenase (Complex I) activity. Under diabetic conditions, myocardial AKAP1 expression decreases which blocks the translocation of NDUFS1 from the cytosol to mitochondria. Reduction of NDUFS1 in mitochondria decreases ATP production and increases mitochondrial ROS level, which causes mitochondrial dysfunction and cell apoptosis, respectively, thereby leading to cardiac dysfunction. The chain is A-kinase anchor protein 1, mitochondrial from Mus musculus (Mouse).